The sequence spans 168 residues: SsrA-binding protein (168 aa).

The disordered stretch occupies residues 1 to 20; sequence MAAQSKQAKPSGKQGGKKII.

The protein belongs to the SmpB family.

It is found in the cytoplasm. Functionally, required for rescue of stalled ribosomes mediated by trans-translation. Binds to transfer-messenger RNA (tmRNA), required for stable association of tmRNA with ribosomes. tmRNA and SmpB together mimic tRNA shape, replacing the anticodon stem-loop with SmpB. tmRNA is encoded by the ssrA gene; the 2 termini fold to resemble tRNA(Ala) and it encodes a 'tag peptide', a short internal open reading frame. During trans-translation Ala-aminoacylated tmRNA acts like a tRNA, entering the A-site of stalled ribosomes, displacing the stalled mRNA. The ribosome then switches to translate the ORF on the tmRNA; the nascent peptide is terminated with the 'tag peptide' encoded by the tmRNA and targeted for degradation. The ribosome is freed to recommence translation, which seems to be the essential function of trans-translation. The protein is SsrA-binding protein of Mycobacterium ulcerans (strain Agy99).